Consider the following 156-residue polypeptide: 6,7-dimethyl-8-ribityllumazine synthase (156 aa).

Residues Phe24, 56-58 (SFE), and 80-82 (AVV) contribute to the 5-amino-6-(D-ribitylamino)uracil site. 85-86 (ET) serves as a coordination point for (2S)-2-hydroxy-3-oxobutyl phosphate. Residue His88 is the Proton donor of the active site. Phe113 is a 5-amino-6-(D-ribitylamino)uracil binding site. A (2S)-2-hydroxy-3-oxobutyl phosphate-binding site is contributed by Arg127.

The protein belongs to the DMRL synthase family.

It carries out the reaction (2S)-2-hydroxy-3-oxobutyl phosphate + 5-amino-6-(D-ribitylamino)uracil = 6,7-dimethyl-8-(1-D-ribityl)lumazine + phosphate + 2 H2O + H(+). It participates in cofactor biosynthesis; riboflavin biosynthesis; riboflavin from 2-hydroxy-3-oxobutyl phosphate and 5-amino-6-(D-ribitylamino)uracil: step 1/2. In terms of biological role, catalyzes the formation of 6,7-dimethyl-8-ribityllumazine by condensation of 5-amino-6-(D-ribitylamino)uracil with 3,4-dihydroxy-2-butanone 4-phosphate. This is the penultimate step in the biosynthesis of riboflavin. This Thermococcus kodakarensis (strain ATCC BAA-918 / JCM 12380 / KOD1) (Pyrococcus kodakaraensis (strain KOD1)) protein is 6,7-dimethyl-8-ribityllumazine synthase.